The following is a 752-amino-acid chain: Iron-sulfur clusters transporter ABCB7, mitochondrial (752 aa).

Residues 1–22 (MALLAMHSWRWAAAAAAFEKRR) constitute a mitochondrion transit peptide. Topologically, residues 23–140 (HSAILIRPLV…KDRPDLRARV (118 aa)) are mitochondrial matrix. Residues 140–436 (VAISLGFLGG…LGTVYRETRQ (297 aa)) form the ABC transmembrane type-1 domain. Residues 141 to 161 (AISLGFLGGAKAMNIVVPFMF) form a helical membrane-spanning segment. The Mitochondrial intermembrane segment spans residues 162–185 (KYAVDSLNQMSGNMLNLSDAPNTV). The chain crosses the membrane as a helical span at residues 186 to 206 (ATMATAVLIGYGVSRAGAAFF). The Mitochondrial matrix portion of the chain corresponds to 207 to 259 (NEVRNAVFGKVAQNSIRRIAKNVFLHLHNLDLGFHLSRQTGALSKAIDRGTRG). N6-acetyllysine occurs at positions 216 and 251. Residues 260-280 (ISFVLSALVFNLLPIMFEVML) traverse the membrane as a helical segment. Residues 281–290 (VSGVLYYKCG) lie on the Mitochondrial intermembrane side of the membrane. The chain crosses the membrane as a helical span at residues 291 to 311 (AQFALVTLGTLGTYTAFTVAV). The Mitochondrial matrix segment spans residues 312-382 (TRWRTRFRIE…TLAMLNFGQS (71 aa)). A glutathione-binding site is contributed by 315-319 (RTRFR). At Ser-336 the chain carries Phosphoserine. Phosphotyrosine is present on Tyr-340. Thr-342 is modified (phosphothreonine). A glutathione-binding site is contributed by 378-381 (NFGQ). The chain crosses the membrane as a helical span at residues 383–403 (AIFSVGLTAIMVLASQGIVAG). The Mitochondrial intermembrane segment spans residues 404–409 (TLTVGD). The chain crosses the membrane as a helical span at residues 410–430 (LVMVNGLLFQLSLPLNFLGTV). Gly-428 contributes to the glutathione binding site. Over 431–752 (YRETRQALID…SVKGCGNCSC (322 aa)) the chain is Mitochondrial matrix. An ABC transporter domain is found at 472–706 (VAFDNVHFEY…PHSIYSEMWH (235 aa)). ATP is bound by residues Tyr-481 and 505–516 (GGSGSGKSTIVR).

It belongs to the ABC transporter superfamily. ABCB family. Heavy Metal importer (TC 3.A.1.210) subfamily. As to quaternary structure, homodimer or heterodimer. Interacts with C10orf88/PAAT. Forms a complex with ABCB10 and FECH, where a dimeric FECH bridges ABCB7 and ABCB10 homodimers; this complex may be required for cellular iron homeostasis, mitochondrial function and heme biosynthesis. Interacts with FECH. Interacts with ATP5F1A. Interacts with COX4I1; this interaction allows the regulation of cellular iron homeostasis and cellular reactive oxygen species (ROS) levels in cardiomyocytes.

It localises to the mitochondrion inner membrane. It catalyses the reaction (glutathione)4[2Fe(III)-2S] cluster(in) + ATP + H2O = (glutathione)4[2Fe(III)-2S] cluster(out) + ADP + phosphate + H(+). ATPase activity is stimulated by glutathione. In terms of biological role, exports glutathione-coordinated iron-sulfur clusters such as [2Fe-2S]-(GS)4 cluster from the mitochondria to the cytosol in an ATP-dependent manner allowing the assembly of the cytosolic iron-sulfur (Fe/S) cluster-containing proteins and participates in iron homeostasis. Moreover, through a functional complex formed of ABCB7, FECH and ABCB10, also plays a role in the cellular iron homeostasis, mitochondrial function and heme biosynthesis. In cardiomyocytes, regulates cellular iron homeostasis and cellular reactive oxygen species (ROS) levels through its interaction with COX4I1. May also play a role in hematopoiesis. The polypeptide is Iron-sulfur clusters transporter ABCB7, mitochondrial (Homo sapiens (Human)).